Consider the following 318-residue polypeptide: Aspartate carbamoyltransferase catalytic subunit (318 aa).

Arginine 58 and threonine 59 together coordinate carbamoyl phosphate. Lysine 86 contributes to the L-aspartate binding site. Carbamoyl phosphate contacts are provided by arginine 108, histidine 141, and glutamine 144. Residues arginine 174 and arginine 226 each coordinate L-aspartate. Carbamoyl phosphate contacts are provided by glycine 270 and proline 271.

Belongs to the aspartate/ornithine carbamoyltransferase superfamily. ATCase family. In terms of assembly, heterododecamer (2C3:3R2) of six catalytic PyrB chains organized as two trimers (C3), and six regulatory PyrI chains organized as three dimers (R2).

The catalysed reaction is carbamoyl phosphate + L-aspartate = N-carbamoyl-L-aspartate + phosphate + H(+). Its pathway is pyrimidine metabolism; UMP biosynthesis via de novo pathway; (S)-dihydroorotate from bicarbonate: step 2/3. Catalyzes the condensation of carbamoyl phosphate and aspartate to form carbamoyl aspartate and inorganic phosphate, the committed step in the de novo pyrimidine nucleotide biosynthesis pathway. The sequence is that of Aspartate carbamoyltransferase catalytic subunit from Lactobacillus helveticus (strain DPC 4571).